The chain runs to 397 residues: G2/mitotic-specific cyclin-B2 (397 aa).

Disordered regions lie at residues 1–20 (MALL…DTGV) and 64–97 (KVTH…PEDV). Position 8 is a phosphothreonine (Thr-8). The residue at position 11 (Ser-11) is a Phosphoserine. Residues 64–74 (KVTHVNKQPKP) are compositionally biased toward polar residues. A phosphoserine mark is found at Ser-77, Ser-98, and Ser-391.

The protein belongs to the cyclin family. Cyclin AB subfamily. In terms of assembly, interacts with the CDK1 protein kinase to form a serine/threonine kinase holoenzyme complex also known as maturation promoting factor (MPF). The cyclin subunit imparts substrate specificity to the complex.

Essential for the control of the cell cycle at the G2/M (mitosis) transition. This Mesocricetus auratus (Golden hamster) protein is G2/mitotic-specific cyclin-B2 (CCNB2).